The following is a 333-amino-acid chain: Anthranilate phosphoribosyltransferase (333 aa).

5-phospho-alpha-D-ribose 1-diphosphate-binding positions include G81, 84–85 (GD), T89, 91–94 (NIST), 109–117 (KHGNRSVSS), and A121. Residue G81 participates in anthranilate binding. S93 is a binding site for Mg(2+). Residue N112 coordinates anthranilate. R167 contacts anthranilate. Mg(2+) contacts are provided by D225 and E226.

It belongs to the anthranilate phosphoribosyltransferase family. Homodimer. Requires Mg(2+) as cofactor.

The catalysed reaction is N-(5-phospho-beta-D-ribosyl)anthranilate + diphosphate = 5-phospho-alpha-D-ribose 1-diphosphate + anthranilate. It functions in the pathway amino-acid biosynthesis; L-tryptophan biosynthesis; L-tryptophan from chorismate: step 2/5. Functionally, catalyzes the transfer of the phosphoribosyl group of 5-phosphorylribose-1-pyrophosphate (PRPP) to anthranilate to yield N-(5'-phosphoribosyl)-anthranilate (PRA). This chain is Anthranilate phosphoribosyltransferase, found in Haemophilus influenzae (strain PittGG).